A 161-amino-acid polypeptide reads, in one-letter code: Transcriptional repressor NrdR (161 aa).

A compositionally biased stretch (polar residues) spans 1-11 (MRCPSCNSLDT). The tract at residues 1–20 (MRCPSCNSLDTQVKDSRPTE) is disordered. The segment at 3-34 (CPSCNSLDTQVKDSRPTEDSSVIRRRRVCVTC) is a zinc-finger region. The ATP-cone domain maps to 49 to 139 (LTVIKRNGRR…VYRNFREAKD (91 aa)).

This sequence belongs to the NrdR family. Requires Zn(2+) as cofactor.

Negatively regulates transcription of bacterial ribonucleotide reductase nrd genes and operons by binding to NrdR-boxes. This chain is Transcriptional repressor NrdR, found in Bradyrhizobium sp. (strain BTAi1 / ATCC BAA-1182).